The chain runs to 523 residues: MGCNQSKSANDVRGNKVNHVNSKKKNNKREDTNDGEEIAINPGMYVRKKEGKIGESYFKVRKLGSGAYGEVLLCKEKNGHSEKAIKVIKKSQFDKGRYSDDNKNIEKFHEEIYNEISLLKSLDHPNIIKLFDVFEDKKYFYLVTEFYEGGELFEQIINRHKFDECDAANIMKQILSGICYLHKHNIVHRDIKPENILLENKNSLLNIKIVDFGLSSFFSKDYKLRDRLGTAYYIAPEVLKKKYNEKCDVWSCGVIMYILLCGYPPFGGQNDQDIIKKVEKGKYYFDFNDWKNISDEAKELIKLMLTYDYNKRCTAEEALNSRWIKKYANNINKSDQKTLCGALSNMRKFEGSQKLAQAAILFIGSKLTTLEERKELTDIFKKLDKNGDGQLDKKELIEGYNVLRNFKNELGELKNVEEEVDNILKEVDFDKNGYIEYSEFISVCMDKQILFSEERLRRAFNLFDTDKSGKITKEELANLFGLTSISEKTWNDVLGEADQNKDNMIDFDEFVSMMHKICDHKTF.

Residues 1 to 36 are disordered; sequence MGCNQSKSANDVRGNKVNHVNSKKKNNKREDTNDGE. Gly-2 carries N-myristoyl glycine lipidation. The S-palmitoyl cysteine moiety is linked to residue Cys-3. In terms of domain architecture, Protein kinase spans 57 to 324; that stretch reads YFKVRKLGSG…AEEALNSRWI (268 aa). ATP-binding positions include 63–71, Lys-86, and Lys-90; that span reads LGSGAYGEV. Ser-65 carries the post-translational modification Phosphoserine. Ser-117 is modified (phosphoserine). Asp-190 acts as the Proton acceptor in catalysis. Residues Ser-216 and Ser-219 each carry the phosphoserine modification. Position 230 is a phosphothreonine (Thr-230). Phosphoserine is present on Ser-334. The short motif at 345–352 is the J domain autoinhibitory motif element; sequence NMRKFEGS. The segment at 345-363 is j domain; that stretch reads NMRKFEGSQKLAQAAILFI. The J domain interacts with the EF-hand domains motif lies at 353 to 363; it reads QKLAQAAILFI. EF-hand domains follow at residues 371–406, 415–450, 451–486, and 487–520; these read EERK…LRNF, NVEE…KQIL, FSEE…TSIS, and EKTW…ICDH. The Ca(2+) site is built by Asp-384, Asn-386, Asp-388, Gln-390, Glu-395, Asp-428, Asp-430, Asn-432, Tyr-434, Glu-439, Asp-464, Asp-466, Ser-468, Lys-470, Glu-475, Asp-498, Asn-500, Asp-502, Met-504, and Glu-509.

It belongs to the protein kinase superfamily. Ser/Thr protein kinase family. CDPK subfamily. As to quaternary structure, monomer. It depends on Mg(2+) as a cofactor. Post-translationally, myristoylated. Myristoylation and palmitoylation are required for the localization to the parasitophorous vacuole membrane. In terms of processing, palmitoylated. Palmitoylation increases in merozoites in response to low level of extracellular K(+) in the host blood. Myristoylation and palmitoylation are required for the localization to the parasitophorous vacuole membrane. Phosphorylation at Thr-230 may regulate CDPK1 kinase activity. Phosphorylation increases in response to an increase in intracellular Ca(2+) levels. Autophosphorylated in vitro. Autophosphorylation does not affect membrane localization in vitro.

The protein resides in the membrane. It is found in the cell membrane. Its subcellular location is the parasitophorous vacuole membrane. It localises to the cytoplasm. The protein localises to the cell projection. The protein resides in the cilium. It is found in the flagellum. Its subcellular location is the host cell membrane. The enzyme catalyses L-seryl-[protein] + ATP = O-phospho-L-seryl-[protein] + ADP + H(+). It carries out the reaction L-threonyl-[protein] + ATP = O-phospho-L-threonyl-[protein] + ADP + H(+). Activated by calcium. Upon calcium binding to the EF-hand domains, the C-terminus of the junction domain (J domain) undergoes a conformational change which results in the dissociation of the pseudo-substrate inhibitory motif from the catalytic domain. This, in turn may facilitate the autophosphorylation of the activation loop at Thr-230, which leads to the kinase activation. Its function is as follows. Calcium-dependent protein kinase which acts as a sensor and effector of intracellular Ca(2+) levels probably in part downstream of cGMP-activated PKG kinase. During the liver stage, involved in sporozoite motility and thus in sporozoite invasion of host hepatocytes, probably together with CDPK4 and CDPK5. In the mosquito midgut and during the last stage of male gamete exflagellation, may play a role in the rupture of the host erythrocyte membrane. In the mosquito midgut, required for the differentiation of the zygote into the ookinete by promoting the translational activation of a subset of repressed mRNAs; these mRNAs are kept repressed in the zygote by the DOZI- or CITH-containing mRNP complexes. Dispensable during the asexual blood stage. This is Calcium-dependent protein kinase 1 from Plasmodium berghei (strain Anka).